A 361-amino-acid polypeptide reads, in one-letter code: Nicotinate-nucleotide--dimethylbenzimidazole phosphoribosyltransferase (361 aa).

The active-site Proton acceptor is the E314.

Belongs to the CobT family.

The catalysed reaction is 5,6-dimethylbenzimidazole + nicotinate beta-D-ribonucleotide = alpha-ribazole 5'-phosphate + nicotinate + H(+). It functions in the pathway nucleoside biosynthesis; alpha-ribazole biosynthesis; alpha-ribazole from 5,6-dimethylbenzimidazole: step 1/2. In terms of biological role, catalyzes the synthesis of alpha-ribazole-5'-phosphate from nicotinate mononucleotide (NAMN) and 5,6-dimethylbenzimidazole (DMB). The chain is Nicotinate-nucleotide--dimethylbenzimidazole phosphoribosyltransferase from Mycobacterium bovis (strain BCG / Pasteur 1173P2).